The following is a 1728-amino-acid chain: Protein NETWORKED 1A (1728 aa).

One can recognise an NAB domain in the interval 13–92; the sequence is YSWWWDSHIP…ERYDHATVEL (80 aa). Coiled-coil stretches lie at residues 155–446, 476–827, 857–885, 954–1016, 1090–1323, 1403–1431, and 1576–1684; these read LGNS…LEIE, MLRD…QVEI, FSEK…EIDN, QFQS…AELQ, EQAE…KETV, LLQD…LRRR, and RRLA…TKSK. Positions 1419–1441 are disordered; it reads AEEKKRRGKLRRRSSSHRSKDRK. The segment covering 1424 to 1439 has biased composition (basic residues); sequence RRGKLRRRSSSHRSKD.

It belongs to the NET family. Interacts with F-actin. In terms of tissue distribution, expressed in root meristems and at very low levels throughout mature vasculature.

The protein localises to the cytoplasm. Its subcellular location is the cytoskeleton. It localises to the cell membrane. The protein resides in the cell junction. It is found in the plasmodesma. Its function is as follows. Plant-specific actin binding protein. Associates with F-actin at the plasma membrane and plasmodesmata. May be part of a membrane-cytoskeletal adapter complex. In Arabidopsis thaliana (Mouse-ear cress), this protein is Protein NETWORKED 1A.